Consider the following 313-residue polypeptide: Olfactory receptor 8B2 (313 aa).

Residues 1 to 25 are Extracellular-facing; the sequence is MLARNNSLVTEFILAGLTDHPEFRQ. N-linked (GlcNAc...) asparagine glycosylation occurs at Asn-5. Residues 26–46 traverse the membrane as a helical segment; sequence PLFFLFLVIYIVTMVGNLGLI. At 47-54 the chain is on the cytoplasmic side; the sequence is TLFGLNSH. A helical membrane pass occupies residues 55–75; it reads LHTPMYYFLFNLSFIDLCYSS. At 76–99 the chain is on the extracellular side; sequence VFTPKMLMNFVSKKNIISNVGCMT. An intrachain disulfide couples Cys-97 to Cys-189. The helical transmembrane segment at 100–120 threads the bilayer; sequence RLFFFLFFVISECYMLTSMAY. The Cytoplasmic segment spans residues 121-139; sequence DRYVAICNPLLYKVTMSHQ. Residues 140–160 form a helical membrane-spanning segment; sequence VCSMLTFAAYIMGLAGATAHT. At 161-197 the chain is on the extracellular side; the sequence is GCMLRLTFCSANIINHYLCDILPLLQLSCTSTYVNEV. The helical transmembrane segment at 198–217 threads the bilayer; that stretch reads VVLIVVGTNITVPSCTILIS. Topologically, residues 218 to 237 are cytoplasmic; sequence YVFIVTSILHIKSTQGRSKA. The helical transmembrane segment at 238 to 258 threads the bilayer; it reads FSTCSSHVIALSLFFGSAAFM. Residues 259–270 are Extracellular-facing; that stretch reads YIKYSSGSMEQG. Residues 271–291 form a helical membrane-spanning segment; that stretch reads KVSSVFYTNVVPMLNPLIYSL. The Cytoplasmic segment spans residues 292-313; that stretch reads RNKDVKVALRKALIKIQRRNIF.

The protein belongs to the G-protein coupled receptor 1 family.

The protein localises to the cell membrane. Its function is as follows. Odorant receptor. The sequence is that of Olfactory receptor 8B2 (OR8B2) from Homo sapiens (Human).